Here is a 263-residue protein sequence, read N- to C-terminus: Chymotrypsinogen B (263 aa).

An N-terminal signal peptide occupies residues methionine 1–glycine 18. 5 cysteine pairs are disulfide-bonded: cysteine 19/cysteine 140, cysteine 60/cysteine 76, cysteine 154/cysteine 219, cysteine 186/cysteine 200, and cysteine 209/cysteine 238. Residues isoleucine 34–glutamate 261 form the Peptidase S1 domain. Histidine 75 acts as the Charge relay system in catalysis. Serine 93 carries the post-translational modification Phosphoserine. Aspartate 120 serves as the catalytic Charge relay system. The active-site Charge relay system is serine 213.

The protein belongs to the peptidase S1 family.

It is found in the secreted. The protein resides in the extracellular space. The enzyme catalyses Preferential cleavage: Tyr-|-Xaa, Trp-|-Xaa, Phe-|-Xaa, Leu-|-Xaa.. The chain is Chymotrypsinogen B (Ctrb1) from Rattus norvegicus (Rat).